The sequence spans 629 residues: Probable indole-3-acetic acid-amido synthetase GH3.4 (629 aa).

The protein belongs to the IAA-amido conjugating enzyme family. As to expression, expressed in flowers.

Functionally, may catalyze the synthesis of indole-3-acetic acid (IAA)-amino acid conjugates, providing a mechanism for the plant to cope with the presence of excess auxin. This Oryza sativa subsp. japonica (Rice) protein is Probable indole-3-acetic acid-amido synthetase GH3.4 (GH3.4).